The chain runs to 530 residues: Autoinducer-2 kinase (530 aa).

This sequence belongs to the FGGY kinase family.

The protein resides in the cytoplasm. The enzyme catalyses (S)-4,5-dihydroxypentane-2,3-dione + ATP = (2S)-2-hydroxy-3,4-dioxopentyl phosphate + ADP + H(+). In terms of biological role, catalyzes the phosphorylation of autoinducer-2 (AI-2) to phospho-AI-2, which subsequently inactivates the transcriptional regulator LsrR and leads to the transcription of the lsr operon. Phosphorylates the ring-open form of (S)-4,5-dihydroxypentane-2,3-dione (DPD), which is the precursor to all AI-2 signaling molecules, at the C5 position. This chain is Autoinducer-2 kinase, found in Yersinia pseudotuberculosis serotype O:3 (strain YPIII).